The following is a 122-amino-acid chain: Large ribosomal subunit protein uL14 (122 aa).

The protein belongs to the universal ribosomal protein uL14 family. As to quaternary structure, part of the 50S ribosomal subunit. Forms a cluster with proteins L3 and L19. In the 70S ribosome, L14 and L19 interact and together make contacts with the 16S rRNA in bridges B5 and B8.

Functionally, binds to 23S rRNA. Forms part of two intersubunit bridges in the 70S ribosome. In Chlamydia caviae (strain ATCC VR-813 / DSM 19441 / 03DC25 / GPIC) (Chlamydophila caviae), this protein is Large ribosomal subunit protein uL14.